The chain runs to 158 residues: Endoribonuclease YbeY (158 aa).

Positions 119, 123, and 129 each coordinate Zn(2+).

Belongs to the endoribonuclease YbeY family. Zn(2+) serves as cofactor.

The protein localises to the cytoplasm. Functionally, single strand-specific metallo-endoribonuclease involved in late-stage 70S ribosome quality control and in maturation of the 3' terminus of the 16S rRNA. This chain is Endoribonuclease YbeY, found in Chlamydia caviae (strain ATCC VR-813 / DSM 19441 / 03DC25 / GPIC) (Chlamydophila caviae).